We begin with the raw amino-acid sequence, 259 residues long: Thiamine thiazole synthase (259 aa).

NAD(+) contacts are provided by residues Ala-33, 52–53 (ER), Gly-60, Val-124, and 152–154 (HVD). 2 residues coordinate Fe cation: Asp-154 and His-169. Met-219 contributes to the NAD(+) binding site. Arg-229 contacts glycine.

Belongs to the THI4 family. As to quaternary structure, homooctamer; tetramer of dimers. The cofactor is Fe(2+).

The enzyme catalyses hydrogen sulfide + glycine + NAD(+) = ADP-5-ethyl-4-methylthiazole-2-carboxylate + nicotinamide + 3 H2O + H(+). It participates in cofactor biosynthesis; thiamine diphosphate biosynthesis. Functionally, involved in the biosynthesis of the thiazole moiety of thiamine. Catalyzes the conversion of NAD and glycine to adenosine diphosphate 5-(2-hydroxyethyl)-4-methylthiazole-2-carboxylate (ADT), an adenylated thiazole intermediate, using free sulfide as a source of sulfur. This Pyrobaculum neutrophilum (strain DSM 2338 / JCM 9278 / NBRC 100436 / V24Sta) (Thermoproteus neutrophilus) protein is Thiamine thiazole synthase.